Consider the following 321-residue polypeptide: Ubiquitin carboxyl-terminal hydrolase ubh-4 (321 aa).

The UCH catalytic domain occupies 6–220; the sequence is SWCLIESDPG…ITFNLMALVP (215 aa). The active-site Nucleophile is the Cys83. His158 (proton donor) is an active-site residue. The ULD domain maps to 273–301; it reads NYTPFVIELMKILAKEGKLVGLVDNAYQA.

This sequence belongs to the peptidase C12 family. As to quaternary structure, interacts with proteasome 19S subunit rpn-13. In terms of tissue distribution, highly expressed in intestine and to a lesser extent in other tissues including muscles and neurons.

The enzyme catalyses Thiol-dependent hydrolysis of ester, thioester, amide, peptide and isopeptide bonds formed by the C-terminal Gly of ubiquitin (a 76-residue protein attached to proteins as an intracellular targeting signal).. In terms of biological role, ubiquitin-protein hydrolase involved both in the processing of ubiquitin precursors and of ubiquitinated proteins. This enzyme is a thiol protease that recognizes and hydrolyzes a peptide bond at the C-terminal glycine of ubiquitin. This is Ubiquitin carboxyl-terminal hydrolase ubh-4 from Caenorhabditis elegans.